Consider the following 601-residue polypeptide: Aspartate--tRNA(Asp/Asn) ligase (601 aa).

E187 contributes to the L-aspartate binding site. An aspartate region spans residues 211-214; it reads QQFK. L-aspartate-binding residues include R233 and H461. 233 to 235 lines the ATP pocket; it reads RDE. Residue E495 coordinates ATP. Residue R502 participates in L-aspartate binding. 547-550 provides a ligand contact to ATP; it reads GLDR.

This sequence belongs to the class-II aminoacyl-tRNA synthetase family. Type 1 subfamily. In terms of assembly, homodimer.

The protein localises to the cytoplasm. It catalyses the reaction tRNA(Asx) + L-aspartate + ATP = L-aspartyl-tRNA(Asx) + AMP + diphosphate. Aspartyl-tRNA synthetase with relaxed tRNA specificity since it is able to aspartylate not only its cognate tRNA(Asp) but also tRNA(Asn). Reaction proceeds in two steps: L-aspartate is first activated by ATP to form Asp-AMP and then transferred to the acceptor end of tRNA(Asp/Asn). This is Aspartate--tRNA(Asp/Asn) ligase from Pelodictyon phaeoclathratiforme (strain DSM 5477 / BU-1).